The sequence spans 79 residues: Ornithine decarboxylase (79 aa).

Residues S8, G45, and 75–78 each bind pyridoxal 5'-phosphate; that span reads EPGR.

The protein belongs to the Orn/Lys/Arg decarboxylase class-II family. In terms of assembly, homodimer. Only the dimer is catalytically active, as the active sites are constructed of residues from both monomers. Pyridoxal 5'-phosphate serves as cofactor.

Its subcellular location is the cytoplasm. It carries out the reaction L-ornithine + H(+) = putrescine + CO2. It participates in amine and polyamine biosynthesis; putrescine biosynthesis via L-ornithine pathway; putrescine from L-ornithine: step 1/1. With respect to regulation, inhibited by antizyme (AZ) OAZ1 in response to polyamine levels. AZ inhibits the assembly of the functional homodimer by binding to ODC monomers and targeting them for ubiquitin-independent proteolytic destruction by the 26S proteasome. In terms of biological role, catalyzes the first and rate-limiting step of polyamine biosynthesis that converts ornithine into putrescine, which is the precursor for the polyamines, spermidine and spermine. Polyamines are essential for cell proliferation and are implicated in cellular processes, ranging from DNA replication to apoptosis. This Paracoccidioides brasiliensis protein is Ornithine decarboxylase (ODC).